Here is a 1238-residue protein sequence, read N- to C-terminus: Protein translocase subunit SecA 1 (1238 aa).

ATP-binding positions include glutamine 107, 125 to 129, and aspartate 570; that span reads GEGKT. The segment at 1194–1220 is disordered; that stretch reads AAGSEGRAEGSVDTVRVEEPRIGRNAP. The span at 1199-1215 shows a compositional bias: basic and acidic residues; that stretch reads GRAEGSVDTVRVEEPRI. Positions 1221, 1223, 1232, and 1233 each coordinate Zn(2+).

Belongs to the SecA family. As to quaternary structure, monomer and homodimer. Part of the essential Sec protein translocation apparatus which comprises SecA, SecYEG and auxiliary proteins SecDF. Other proteins may also be involved. Zn(2+) serves as cofactor.

Its subcellular location is the cell inner membrane. It localises to the cytoplasm. The catalysed reaction is ATP + H2O + cellular proteinSide 1 = ADP + phosphate + cellular proteinSide 2.. Part of the Sec protein translocase complex. Interacts with the SecYEG preprotein conducting channel. Has a central role in coupling the hydrolysis of ATP to the transfer of proteins into and across the cell membrane, serving as an ATP-driven molecular motor driving the stepwise translocation of polypeptide chains across the membrane. This is Protein translocase subunit SecA 1 from Rhodopirellula baltica (strain DSM 10527 / NCIMB 13988 / SH1).